The chain runs to 306 residues: Protoheme IX farnesyltransferase (306 aa).

Transmembrane regions (helical) follow at residues 28 to 48 (LGLV…AIML), 53 to 73 (FLSS…IMAG), 105 to 125 (ASIL…LFTI), 127 to 147 (IETG…YSVW), 156 to 176 (TIIG…AIEP), 182 to 202 (AWML…ALAI), 227 to 244 (LSML…FFMQ), 246 to 266 (LGTV…LLAI), and 283 to 303 (FVYS…VTLI).

This sequence belongs to the UbiA prenyltransferase family. Protoheme IX farnesyltransferase subfamily. As to quaternary structure, interacts with CtaA.

The protein localises to the cell membrane. It carries out the reaction heme b + (2E,6E)-farnesyl diphosphate + H2O = Fe(II)-heme o + diphosphate. The protein operates within porphyrin-containing compound metabolism; heme O biosynthesis; heme O from protoheme: step 1/1. Its function is as follows. Converts heme B (protoheme IX) to heme O by substitution of the vinyl group on carbon 2 of heme B porphyrin ring with a hydroxyethyl farnesyl side group. This is Protoheme IX farnesyltransferase from Macrococcus caseolyticus (strain JCSC5402) (Macrococcoides caseolyticum).